A 653-amino-acid polypeptide reads, in one-letter code: Fructose-1,6-bisphosphatase class 3 (653 aa).

This sequence belongs to the FBPase class 3 family. It depends on Mn(2+) as a cofactor.

The enzyme catalyses beta-D-fructose 1,6-bisphosphate + H2O = beta-D-fructose 6-phosphate + phosphate. The protein operates within carbohydrate biosynthesis; gluconeogenesis. This is Fructose-1,6-bisphosphatase class 3 from Listeria innocua serovar 6a (strain ATCC BAA-680 / CLIP 11262).